A 159-amino-acid polypeptide reads, in one-letter code: Small ribosomal subunit protein uS7 (159 aa).

The protein belongs to the universal ribosomal protein uS7 family. As to quaternary structure, part of the 30S ribosomal subunit. Contacts proteins S9 and S11.

Its function is as follows. One of the primary rRNA binding proteins, it binds directly to 16S rRNA where it nucleates assembly of the head domain of the 30S subunit. Is located at the subunit interface close to the decoding center, probably blocks exit of the E-site tRNA. This is Small ribosomal subunit protein uS7 from Rickettsia felis (strain ATCC VR-1525 / URRWXCal2) (Rickettsia azadi).